Here is a 253-residue protein sequence, read N- to C-terminus: Triosephosphate isomerase (253 aa).

Position 9–11 (9–11 (NWK)) interacts with substrate. Residue H96 is the Electrophile of the active site. E169 functions as the Proton acceptor in the catalytic mechanism. Substrate is bound by residues G175, S215, and 236–237 (GG).

This sequence belongs to the triosephosphate isomerase family. Homodimer.

The protein localises to the cytoplasm. The catalysed reaction is D-glyceraldehyde 3-phosphate = dihydroxyacetone phosphate. It functions in the pathway carbohydrate biosynthesis; gluconeogenesis. The protein operates within carbohydrate degradation; glycolysis; D-glyceraldehyde 3-phosphate from glycerone phosphate: step 1/1. Its function is as follows. Involved in the gluconeogenesis. Catalyzes stereospecifically the conversion of dihydroxyacetone phosphate (DHAP) to D-glyceraldehyde-3-phosphate (G3P). The chain is Triosephosphate isomerase from Borrelia garinii subsp. bavariensis (strain ATCC BAA-2496 / DSM 23469 / PBi) (Borreliella bavariensis).